A 626-amino-acid chain; its full sequence is tRNA 5-methylaminomethyl-2-thiouridine biosynthesis bifunctional protein MnmC (626 aa).

Positions 1–237 are tRNA (mnm(5)s(2)U34)-methyltransferase; sequence MKGPQLDYAD…KRDMTVGVFQ (237 aa). Residues 255–626 form an FAD-dependent cmnm(5)s(2)U34 oxidoreductase region; that stretch reads IGSGLSGANV…RVLPNRFSQE (372 aa).

The protein in the N-terminal section; belongs to the methyltransferase superfamily. tRNA (mnm(5)s(2)U34)-methyltransferase family. In the C-terminal section; belongs to the DAO family. FAD serves as cofactor.

The protein resides in the cytoplasm. It catalyses the reaction 5-aminomethyl-2-thiouridine(34) in tRNA + S-adenosyl-L-methionine = 5-methylaminomethyl-2-thiouridine(34) in tRNA + S-adenosyl-L-homocysteine + H(+). Catalyzes the last two steps in the biosynthesis of 5-methylaminomethyl-2-thiouridine (mnm(5)s(2)U) at the wobble position (U34) in tRNA. Catalyzes the FAD-dependent demodification of cmnm(5)s(2)U34 to nm(5)s(2)U34, followed by the transfer of a methyl group from S-adenosyl-L-methionine to nm(5)s(2)U34, to form mnm(5)s(2)U34. The protein is tRNA 5-methylaminomethyl-2-thiouridine biosynthesis bifunctional protein MnmC of Hahella chejuensis (strain KCTC 2396).